The following is a 906-amino-acid chain: uncharacterized protein (906 aa).

Disordered regions lie at residues 231–322 (KEDA…PSTI) and 865–906 (AGAY…DEDE). Over residues 236-250 (TTKQTTTTTTTTPQT) the composition is skewed to low complexity. A compositionally biased stretch (pro residues) spans 264 to 281 (TPTPAPAPKPTTPKPTPA). The span at 302-314 (SVNNIPTPSDTNE) shows a compositional bias: polar residues. The span at 867–906 (AYEDDDDDEGEGNEDDEDNDENEDEDEGEGEGDSSEDEDE) shows a compositional bias: acidic residues.

This is an uncharacterized protein from Dictyostelium sp. (strain GA11) (Slime mold).